A 329-amino-acid chain; its full sequence is NTD biosynthesis operon regulator NtdR (329 aa).

The 55-residue stretch at 2-56 folds into the HTH lacI-type domain; the sequence is PTIDEIAKLCNVSKTTVSRVLNNHPYVSKEKRDMILKAINELDYTPNYLARNFRR. The H-T-H motif DNA-binding region spans 4-23; sequence IDEIAKLCNVSKTTVSRVLN.

Positively regulates the ntdABC operon and negatively regulates its own transcription. Binds to NTD to induce ntdABC transcription. This is NTD biosynthesis operon regulator NtdR (ntdR) from Bacillus subtilis (strain 168).